The following is a 136-amino-acid chain: Histone H3.2 (136 aa).

Residues 1-43 are disordered; that stretch reads MARTKQTARKSTGGKAPRKQLATKAARKSAPATGGVKKPHRFR. K5 bears the N6-methylated lysine mark. The residue at position 10 (K10) is an N6-acetyllysine; alternate. K10 bears the N6-methylated lysine; alternate mark. The residue at position 11 (S11) is a Phosphoserine. A Phosphothreonine modification is found at T12. N6-acetyllysine is present on K15. K19 and K24 each carry N6-acetyllysine; alternate. N6-methylated lysine; alternate occurs at positions 19 and 24. Position 28 is an N6-methylated lysine (K28). A Phosphoserine modification is found at S29. K37 carries the post-translational modification N6-methylated lysine.

This sequence belongs to the histone H3 family. The nucleosome is a histone octamer containing two molecules each of H2A, H2B, H3 and H4 assembled in one H3-H4 heterotetramer and two H2A-H2B heterodimers. The octamer wraps approximately 147 bp of DNA. Post-translationally, acetylation is generally linked to gene activation. Can be acetylated to form H3K9ac, H3K14ac, H3K18ac and H3K23ac. H3K9ac could compete with H3K9me and prevent gene silencing. H3K9ac is restricted to euchromatin. Methylated to form mainly H3K4me, H3K9me, H3K18me, H3K23me, H3K27me and H3K36me. H3K4me1/2/3, H3K9me3, H3K27me3 and H3K36me1/2/3 are typical marks for euchromatin, whereas heterochromatic chromocenters are enriched in H3K9me1/2 and H3K27me1/2. H2BK143ub1 is probably prerequisite for H3K4me. In terms of processing, can be phosphorylated to form H3S10ph, H3T11ph and H3S28ph.

The protein resides in the nucleus. It localises to the chromosome. Its function is as follows. Core component of nucleosome. Nucleosomes wrap and compact DNA into chromatin, limiting DNA accessibility to the cellular machineries which require DNA as a template. Histones thereby play a central role in transcription regulation, DNA repair, DNA replication and chromosomal stability. DNA accessibility is regulated via a complex set of post-translational modifications of histones, also called histone code, and nucleosome remodeling. This Triticum aestivum (Wheat) protein is Histone H3.2.